We begin with the raw amino-acid sequence, 1450 residues long: DNA-directed RNA polymerase RPB1 homolog (1450 aa).

This sequence belongs to the RNA polymerase beta' chain family. Part of the viral DNA-directed RNA polymerase that consists of 8 polII-like subunits (RPB1, RPB2, RPB3, RPB5, RPB6, RPB7, RPB9, RPB10), a capping enzyme and a termination factor.

The protein localises to the virion. It catalyses the reaction RNA(n) + a ribonucleoside 5'-triphosphate = RNA(n+1) + diphosphate. Its function is as follows. Catalytic component of the DNA-directed RNA polymerase (RNAP) that catalyzes the transcription in the cytoplasm of viral DNA into RNA using the four ribonucleoside triphosphates as substrates. Forms the polymerase active center together with RPB2. Part of the core element with the central large cleft, the clamp element that moves to open and close the cleft and the jaws that are thought to grab the incoming DNA template. This is DNA-directed RNA polymerase RPB1 homolog from African swine fever virus (isolate Tick/South Africa/Pretoriuskop Pr4/1996) (ASFV).